A 229-amino-acid polypeptide reads, in one-letter code: Cytidylate kinase (229 aa).

12–20 (GPSGVGKST) serves as a coordination point for ATP.

This sequence belongs to the cytidylate kinase family. Type 1 subfamily.

The protein localises to the cytoplasm. It carries out the reaction CMP + ATP = CDP + ADP. It catalyses the reaction dCMP + ATP = dCDP + ADP. In Mesomycoplasma hyopneumoniae (strain 232) (Mycoplasma hyopneumoniae), this protein is Cytidylate kinase.